Reading from the N-terminus, the 128-residue chain is S-adenosylmethionine decarboxylase proenzyme (128 aa).

The Schiff-base intermediate with substrate; via pyruvic acid role is filled by Ser-61. Ser-61 carries the post-translational modification Pyruvic acid (Ser); by autocatalysis. His-66 acts as the Proton acceptor; for processing activity in catalysis. Residue Cys-81 is the Proton donor; for catalytic activity of the active site.

It belongs to the prokaryotic AdoMetDC family. Type 1 subfamily. As to quaternary structure, heterotetramer of two alpha and two beta chains arranged as a dimer of alpha/beta heterodimers. It depends on pyruvate as a cofactor. Post-translationally, is synthesized initially as an inactive proenzyme. Formation of the active enzyme involves a self-maturation process in which the active site pyruvoyl group is generated from an internal serine residue via an autocatalytic post-translational modification. Two non-identical subunits are generated from the proenzyme in this reaction, and the pyruvate is formed at the N-terminus of the alpha chain, which is derived from the carboxyl end of the proenzyme. The post-translation cleavage follows an unusual pathway, termed non-hydrolytic serinolysis, in which the side chain hydroxyl group of the serine supplies its oxygen atom to form the C-terminus of the beta chain, while the remainder of the serine residue undergoes an oxidative deamination to produce ammonia and the pyruvoyl group blocking the N-terminus of the alpha chain.

The catalysed reaction is S-adenosyl-L-methionine + H(+) = S-adenosyl 3-(methylsulfanyl)propylamine + CO2. It functions in the pathway amine and polyamine biosynthesis; S-adenosylmethioninamine biosynthesis; S-adenosylmethioninamine from S-adenosyl-L-methionine: step 1/1. In terms of biological role, catalyzes the decarboxylation of S-adenosylmethionine to S-adenosylmethioninamine (dcAdoMet), the propylamine donor required for the synthesis of the polyamines spermine and spermidine from the diamine putrescine. The protein is S-adenosylmethionine decarboxylase proenzyme of Parasynechococcus marenigrum (strain WH8102).